A 536-amino-acid chain; its full sequence is MLNRVEQELALLGITNVKEIVYNPSYEQLFEEEMKPELEGFEKGRLTTSGAVAVDTGIFTGRSPKDKFIVLDENTKDTVWWTSDEVKNDNKPMSQSTWQSIKELVTNQLSNKRLFVIDAFCGANKDSRVAVRIVTEVAWQAHFVKNMFIRPSEAELANFTPDFVVMNGSKVTNPNWKEQGLNSENFVAFNITEKIQLIGGTWYGGEMKKGLFSLMNYWLPLKGIASMHCSANVGEDGDVAVFFGLSGTGKTTLSTDPKRKLIGDDEHGWDDDGVFNYEGGCYAKTINLSEENEPDIYRAIKRDALLENVVVREDGSIDFADGSKTENTRVSYPIYHIDNIVEPVSKAGHATKVIFLTADAFGVLPPVSKLTPEQTKYYFLSGFTAKLAGTERGVTEPTPTFSACFGKAFLSLHPTQYAEVLVKRMEASGAEAYLVNTGWNGTGKRISIKDTRGIIDAILDGSIEKAEMGSLPIFNLAIPKALPGVDPAILDPRDTYADKAQWQAKAEDLAGRFVKNFEQYATNDEGKALIAAGPKL.

R62, Y203, and K209 together coordinate substrate. ATP contacts are provided by residues K209, H228, and 244–252; that span reads GLSGTGKTT. Positions 209 and 228 each coordinate Mn(2+). Mn(2+) is bound at residue D265. Residues E293, R329, 445–446, and T451 each bind ATP; that span reads RI. R329 contributes to the substrate binding site.

The protein belongs to the phosphoenolpyruvate carboxykinase (ATP) family. In terms of assembly, monomer. It depends on Mn(2+) as a cofactor.

It localises to the cytoplasm. The enzyme catalyses oxaloacetate + ATP = phosphoenolpyruvate + ADP + CO2. Its pathway is carbohydrate biosynthesis; gluconeogenesis. Its function is as follows. Involved in the gluconeogenesis. Catalyzes the conversion of oxaloacetate (OAA) to phosphoenolpyruvate (PEP) through direct phosphoryl transfer between the nucleoside triphosphate and OAA. The polypeptide is Phosphoenolpyruvate carboxykinase (ATP) (Glaesserella parasuis serovar 5 (strain SH0165) (Haemophilus parasuis)).